Reading from the N-terminus, the 151-residue chain is UPF0178 protein Pfl01_5469 (151 aa).

Belongs to the UPF0178 family.

The chain is UPF0178 protein Pfl01_5469 from Pseudomonas fluorescens (strain Pf0-1).